The primary structure comprises 222 residues: Sperm acrosome-associated protein 9 (222 aa).

A disordered region spans residues Gln-164–Leu-222.

Microtubule inner protein component of sperm flagellar doublet microtubules. Interacts with CABP1 and CALR. Interacts with INCA1. Interacts with microtubules.

Its subcellular location is the cytoplasm. It is found in the cytoplasmic vesicle. The protein resides in the secretory vesicle. It localises to the acrosome. The protein localises to the cytoskeleton. Its subcellular location is the cilium basal body. It is found in the flagellum axoneme. The protein resides in the cilium axoneme. It localises to the nucleus. In terms of biological role, microtubule inner protein (MIP) part of the dynein-decorated doublet microtubules (DMTs) of multiciliated respiratory cells and the distal singlet microtubules of monoflagellated spermatozoa. Forms an extensive interaction network cross-linking the lumen of axonemal doublet microtubules. The chain is Sperm acrosome-associated protein 9 from Homo sapiens (Human).